The following is a 482-amino-acid chain: NADH-quinone oxidoreductase subunit D (482 aa).

The segment covering 1 to 16 (MTTNTSTSSTTDDLTT) has biased composition (low complexity). A disordered region spans residues 1-48 (MTTNTSTSSTTDDLTTGAPNGTGAPDGANGVGGPTGTVGGPGEHPAYE). A compositionally biased stretch (gly residues) spans 29 to 42 (NGVGGPTGTVGGPG).

It belongs to the complex I 49 kDa subunit family. In terms of assembly, NDH-1 is composed of 14 different subunits. Subunits NuoB, C, D, E, F, and G constitute the peripheral sector of the complex.

Its subcellular location is the cell membrane. The catalysed reaction is a quinone + NADH + 5 H(+)(in) = a quinol + NAD(+) + 4 H(+)(out). Its function is as follows. NDH-1 shuttles electrons from NADH, via FMN and iron-sulfur (Fe-S) centers, to quinones in the respiratory chain. The immediate electron acceptor for the enzyme in this species is believed to be a menaquinone. Couples the redox reaction to proton translocation (for every two electrons transferred, four hydrogen ions are translocated across the cytoplasmic membrane), and thus conserves the redox energy in a proton gradient. In Frankia casuarinae (strain DSM 45818 / CECT 9043 / HFP020203 / CcI3), this protein is NADH-quinone oxidoreductase subunit D.